An 877-amino-acid chain; its full sequence is Leucine--tRNA ligase (877 aa).

A 'HIGH' region motif is present at residues 43-53 (PYPSGRIHMGH). Positions 628 to 632 (KMSKS) match the 'KMSKS' region motif. Lys631 is a binding site for ATP.

This sequence belongs to the class-I aminoacyl-tRNA synthetase family.

It is found in the cytoplasm. It catalyses the reaction tRNA(Leu) + L-leucine + ATP = L-leucyl-tRNA(Leu) + AMP + diphosphate. In Brucella abortus biovar 1 (strain 9-941), this protein is Leucine--tRNA ligase.